The primary structure comprises 373 residues: Mannitol-1-phosphate 5-dehydrogenase (373 aa).

3-14 (ALHFGAGNIGRG) lines the NAD(+) pocket.

It belongs to the mannitol dehydrogenase family.

It carries out the reaction D-mannitol 1-phosphate + NAD(+) = beta-D-fructose 6-phosphate + NADH + H(+). The protein is Mannitol-1-phosphate 5-dehydrogenase of Bacillus velezensis (strain DSM 23117 / BGSC 10A6 / LMG 26770 / FZB42) (Bacillus amyloliquefaciens subsp. plantarum).